Consider the following 810-residue polypeptide: Phenylalanine--tRNA ligase beta subunit (810 aa).

The region spanning 39 to 150 (RSWAAGVVLG…LDLPSGSPVG (112 aa)) is the tRNA-binding domain. A B5 domain is found at 407 to 495 (RGEAIINLRL…RLYGYDHFCE (89 aa)). Mg(2+)-binding residues include Asp-473, Asp-479, Glu-482, and Glu-483. Residues 716–809 (SPYPAVARDL…LTKQFAVSLR (94 aa)) enclose the FDX-ACB domain.

Belongs to the phenylalanyl-tRNA synthetase beta subunit family. Type 1 subfamily. In terms of assembly, tetramer of two alpha and two beta subunits. The cofactor is Mg(2+).

Its subcellular location is the cytoplasm. It carries out the reaction tRNA(Phe) + L-phenylalanine + ATP = L-phenylalanyl-tRNA(Phe) + AMP + diphosphate + H(+). In Synechocystis sp. (strain ATCC 27184 / PCC 6803 / Kazusa), this protein is Phenylalanine--tRNA ligase beta subunit (pheT).